The primary structure comprises 328 residues: GTP 3',8-cyclase (328 aa).

The 221-residue stretch at 9-229 (GFGRDVRYLR…DNGLNTGGPA (221 aa)) folds into the Radical SAM core domain. Arginine 18 serves as a coordination point for GTP. [4Fe-4S] cluster is bound by residues cysteine 25 and cysteine 29. Residue tyrosine 31 participates in S-adenosyl-L-methionine binding. Cysteine 32 is a [4Fe-4S] cluster binding site. Arginine 60 serves as a coordination point for GTP. Glycine 64 serves as a coordination point for S-adenosyl-L-methionine. Residue threonine 94 participates in GTP binding. Serine 118 contributes to the S-adenosyl-L-methionine binding site. Residue lysine 154 participates in GTP binding. Methionine 188 serves as a coordination point for S-adenosyl-L-methionine. [4Fe-4S] cluster is bound by residues cysteine 252 and cysteine 255. 257-259 (RVR) serves as a coordination point for GTP. Residue cysteine 269 coordinates [4Fe-4S] cluster.

This sequence belongs to the radical SAM superfamily. MoaA family. Monomer and homodimer. The cofactor is [4Fe-4S] cluster.

It catalyses the reaction GTP + AH2 + S-adenosyl-L-methionine = (8S)-3',8-cyclo-7,8-dihydroguanosine 5'-triphosphate + 5'-deoxyadenosine + L-methionine + A + H(+). It participates in cofactor biosynthesis; molybdopterin biosynthesis. Catalyzes the cyclization of GTP to (8S)-3',8-cyclo-7,8-dihydroguanosine 5'-triphosphate. This is GTP 3',8-cyclase from Rhodobacter capsulatus (Rhodopseudomonas capsulata).